The following is a 200-amino-acid chain: TATA-box-binding protein 2 (200 aa).

Repeat copies occupy residues 25–101 (LQNI…ARII) and 115–192 (IQNI…YPVL).

Belongs to the TBP family. As to quaternary structure, belongs to the TFIID complex together with the TBP-associated factors (TAFs). Binds DNA as monomer.

Its subcellular location is the nucleus. Its function is as follows. General transcription factor that functions at the core of the DNA-binding multiprotein factor TFIID. Binding of TFIID to the TATA box is the initial transcriptional step of the pre-initiation complex (PIC), playing a role in the activation of eukaryotic genes transcribed by RNA polymerase II. The chain is TATA-box-binding protein 2 (TBP2) from Zea mays (Maize).